The sequence spans 484 residues: Glutamate--tRNA ligase (484 aa).

The 'HIGH' region signature appears at 9–19 (PSPTGNLHIGT). Residues C98, C100, H125, and H127 each coordinate Zn(2+). Residues 250 to 254 (KLSKR) carry the 'KMSKS' region motif. K253 is an ATP binding site.

Belongs to the class-I aminoacyl-tRNA synthetase family. Glutamate--tRNA ligase type 1 subfamily. As to quaternary structure, monomer. It depends on Zn(2+) as a cofactor.

The protein localises to the cytoplasm. It carries out the reaction tRNA(Glu) + L-glutamate + ATP = L-glutamyl-tRNA(Glu) + AMP + diphosphate. Its function is as follows. Catalyzes the attachment of glutamate to tRNA(Glu) in a two-step reaction: glutamate is first activated by ATP to form Glu-AMP and then transferred to the acceptor end of tRNA(Glu). The sequence is that of Glutamate--tRNA ligase from Crocosphaera subtropica (strain ATCC 51142 / BH68) (Cyanothece sp. (strain ATCC 51142)).